The following is a 247-amino-acid chain: Segregation and condensation protein A (247 aa).

It belongs to the ScpA family. In terms of assembly, component of a cohesin-like complex composed of ScpA, ScpB and the Smc homodimer, in which ScpA and ScpB bind to the head domain of Smc. The presence of the three proteins is required for the association of the complex with DNA.

The protein resides in the cytoplasm. In terms of biological role, participates in chromosomal partition during cell division. May act via the formation of a condensin-like complex containing Smc and ScpB that pull DNA away from mid-cell into both cell halves. This is Segregation and condensation protein A from Bacillus cereus (strain G9842).